Consider the following 324-residue polypeptide: MIFVTLEHILTHISFSIISVVIIIQLMTFFVHEIPALSDSLEKGMIATFLSITGLLIIRWIYSGHFPLSNLYESLMFLSWSFAIIHMIPKIWNHKNKNYLSAITIPSAIFTQAFATSGLSTEMHESGILVPALRSHWLMMHVSMMLLSYAALLVGSLFSIALLVITFRKNGKLVVENQNLLIGSSFFDQMDYLNFNENINVLENPSFSSSFKNYYKYQLVERLDYWSSRVISIGFSFLTIGILSGAVWANEAWGSYWNWDPKETWAFITWTIYAIYSHTRTTKNGQGANSAIVASIGFFIIWICYFGVNLLGIGLHSYGSFILS.

The next 8 helical transmembrane spans lie at 17–37, 44–64, 68–88, 99–119, 145–165, 230–250, 264–278, and 291–311; these read IISV…IPAL, GMIA…IYSG, LSNL…IHMI, YLSA…TSGL, MLLS…LLVI, VISI…VWAN, TWAF…IYSH, and AIVA…VNLL.

It belongs to the CcmF/CycK/Ccl1/NrfE/CcsA family. As to quaternary structure, may interact with Ccs1.

It localises to the plastid. Its subcellular location is the chloroplast thylakoid membrane. Its function is as follows. Required during biogenesis of c-type cytochromes (cytochrome c6 and cytochrome f) at the step of heme attachment. This is Cytochrome c biogenesis protein CcsA from Lemna minor (Common duckweed).